A 217-amino-acid chain; its full sequence is MHRTMAVTAVLVLSAAGAAHAWGGLFNRFSSDMLANLGYGRSPYRHYPYGQEPEEVYAEALEGNRLDDVIDEPGHCYSAPCTTNGDCCRGLLCLDTEDGGRCLPAFAGRKLGEICNRENQCDAGLVCEEVVPGEMHVCRPPTAGRKQYNEDCNSSSECDVTRGLCCIMQRRHRQKPRKSCGYFKEPLVCIGPVATDQIREFVQHTAGEKRIGVYRLH.

An N-terminal signal peptide occupies residues 1–21 (MHRTMAVTAVLVLSAAGAAHA). Residues 22 to 208 (WGGLFNRFSS…REFVQHTAGE (187 aa)) constitute a propeptide that is removed on maturation.

As to expression, ITG-like peptide: Expressed in corpora cardiaca (CC), corpora allata (CA), antennal lobe (AL) and gnathal ganglion (GNG) (at protein level). Expression in AL detected in all animals, expression in GNG detected in most animals and in CA and CC detected in few animals (at protein level).

The protein resides in the secreted. This Agrotis ipsilon (Black cutworm moth) protein is ITG-like peptide.